A 97-amino-acid chain; its full sequence is Acylphosphatase (97 aa).

In terms of domain architecture, Acylphosphatase-like spans 11–97 (TYYVRVRGTV…EKRYERFEQH (87 aa)). Residues Arg26 and Asn44 contribute to the active site. Residues 76–97 (RVTEVSGEERSTEKRYERFEQH) are disordered. The span at 82-97 (GEERSTEKRYERFEQH) shows a compositional bias: basic and acidic residues.

This sequence belongs to the acylphosphatase family.

It carries out the reaction an acyl phosphate + H2O = a carboxylate + phosphate + H(+). In Paraburkholderia xenovorans (strain LB400), this protein is Acylphosphatase (acyP).